The following is a 223-amino-acid chain: UPF0758 protein HD_0732 (223 aa).

One can recognise an MPN domain in the interval 98–220; that stretch reads TINTPHLAIM…YFSFEEERFH (123 aa). 3 residues coordinate Zn(2+): His-169, His-171, and Asp-182. The JAMM motif signature appears at 169 to 182; the sequence is HNHPSGNCTASQAD.

The protein belongs to the UPF0758 family.

In Haemophilus ducreyi (strain 35000HP / ATCC 700724), this protein is UPF0758 protein HD_0732.